The sequence spans 445 residues: METILQHVPVGQKVGIAFSGGLDTSAALRWMKNKGALPYAYTANLGQPDEEDYDAIPRKALEYGAEKARLIDCRPQLANEGIAAIQAGAFHISTGGITYFNTTPLGRAVTGTMLVAAMKEDDVHIWGDGSTFKGNDIERFYRYGLLTNPALKIYKPWLDQTFIDELGGRAEMSAFMTKEGFGYKMSAEKAYSTDSNMLGATHEAKDLEHLNSGIRIVNPIMGVAFWKPEVEVKAEEVSITFDEGRPVAVNGREIADPVEMFLELNRIGGRHGLGMSDQIENRIIEAKSRGIYEAPGMALLHIAYERLVTGIHNEDTIEQYRINGLRLGRLLYQGRWFDPQAIMLRETAQRWVARAVTGTVTLELRRGNDYSILNTESPNLTYAPERLSMEKVEDAPFSPADRIGQLTMRNLDLMDTRDKLAIYSKAGLLSLGTSSALPQLGGDKK.

ATP contacts are provided by residues 17–25 (AFSGGLDTS) and Ala-43. Position 99 (Tyr-99) interacts with L-citrulline. Residues Gly-129 and Thr-131 each contribute to the ATP site. L-aspartate-binding residues include Thr-131, Asn-135, and Asp-136. Asn-135 is a binding site for L-citrulline. Asp-136 provides a ligand contact to ATP. Arg-139 and Ser-192 together coordinate L-citrulline. Asp-194 is a binding site for ATP. L-citrulline is bound by residues Thr-201, Glu-203, and Glu-280.

The protein belongs to the argininosuccinate synthase family. Type 2 subfamily. In terms of assembly, homotetramer.

Its subcellular location is the cytoplasm. It catalyses the reaction L-citrulline + L-aspartate + ATP = 2-(N(omega)-L-arginino)succinate + AMP + diphosphate + H(+). Its pathway is amino-acid biosynthesis; L-arginine biosynthesis; L-arginine from L-ornithine and carbamoyl phosphate: step 2/3. This Ralstonia nicotianae (strain ATCC BAA-1114 / GMI1000) (Ralstonia solanacearum) protein is Argininosuccinate synthase (argG).